The following is a 255-amino-acid chain: MGRCGRSNDGVIGGVRPYVRSPVPRLRWTPELHRSFVHAVDLLGGQYKATPKLVLKIMDVKGLTISHVKSHLQMYRGSRITLLGKPEESSSPSSRRRRRQDNEEDHLHDNLSVHARNDCLLGFHSFNFREQTSATDNDDDDFLNIMNMERTKTFAGNGESIKFQSHHSLEAENTKNIWKNTWRENEHEEEEELSLSLSLNHPHNHQQRWKSNASSSLSETSEAVSSSSGPFIFRDCFASSKIDLNLNLSFSLLHS.

The HTH myb-type domain occupies Arg-20–Ile-80. A DNA-binding region (H-T-H motif) is located at residues Pro-51 to Arg-76. The interval Ile-80–Asn-110 is disordered.

The protein localises to the nucleus. Its function is as follows. Putative transcription factor. The polypeptide is Putative Myb family transcription factor At1g14600 (Arabidopsis thaliana (Mouse-ear cress)).